The following is a 284-amino-acid chain: N-methyltransferase sirN (284 aa).

This sequence belongs to the methyltransferase superfamily. LaeA methyltransferase family.

It functions in the pathway mycotoxin biosynthesis. Its function is as follows. N-methyltransferase; part of the gene cluster that mediates the biosynthesis of sirodesmin PL, an epipolythiodioxopiperazine (ETP) characterized by a disulfide bridged cyclic dipeptide and that acts as a phytotoxin which is involved in the blackleg didease of canola. SirD catalyzes the O-prenylation of L-tyrosine (L-Tyr) in the presence of dimethylallyl diphosphate (DMAPP) to yield 4-O-dimethylallyl-L-Tyr, and therefore represents probably the first pathway-specific enzyme in the biosynthesis of sirodesmin PL. 4-O-dimethylallyl-L-Tyr, then undergoes condensation with L-Ser in a reaction catalyzed by the non-ribosomal peptide synthase sirP to form the diketopiperazine (DKP) backbone. Further bishydroxylation of the DKP performed by the cytochrome P450 monooxygenase sirC leads to the production of the intermediate phomamide. This step is essential to form the reactive thiol group required for toxicity of sirodesmin PL. The next steps of sirodesmin biosynthesis are not well understood yet but some predictions could be made from intermediate compounds identification. Phomamide is converted into phomalizarine via oxidation, probably by sirT. Further oxidation, methylation (by sirM or sirN) and reduction steps convert phomalizarine to deacetyl sirodesmin. Finally, acetyltransferase sirH probably acetylates deacetyl sirodesmin to produce sirodesmin PL. The sequence is that of N-methyltransferase sirN from Leptosphaeria maculans (Blackleg fungus).